Consider the following 271-residue polypeptide: ATP synthase subunit a (271 aa).

Helical transmembrane passes span 40–60 (TINI…LVLF), 100–120 (LIAP…LMDL), 146–166 (DVNV…FYSI), 220–240 (LIFI…LNVP), and 242–262 (AIFH…LTIV).

It belongs to the ATPase A chain family. F-type ATPases have 2 components, CF(1) - the catalytic core - and CF(0) - the membrane proton channel. CF(1) has five subunits: alpha(3), beta(3), gamma(1), delta(1), epsilon(1). CF(0) has three main subunits: a(1), b(2) and c(9-12). The alpha and beta chains form an alternating ring which encloses part of the gamma chain. CF(1) is attached to CF(0) by a central stalk formed by the gamma and epsilon chains, while a peripheral stalk is formed by the delta and b chains.

The protein resides in the cell inner membrane. In terms of biological role, key component of the proton channel; it plays a direct role in the translocation of protons across the membrane. In Escherichia coli O8 (strain IAI1), this protein is ATP synthase subunit a.